Here is a 425-residue protein sequence, read N- to C-terminus: Histidine--tRNA ligase (425 aa).

It belongs to the class-II aminoacyl-tRNA synthetase family. In terms of assembly, homodimer.

The protein resides in the cytoplasm. The catalysed reaction is tRNA(His) + L-histidine + ATP = L-histidyl-tRNA(His) + AMP + diphosphate + H(+). This is Histidine--tRNA ligase from Shewanella sp. (strain MR-7).